A 295-amino-acid chain; its full sequence is Protease HtpX (295 aa).

Helical transmembrane passes span 4–24 (ILLF…TLSL) and 41–61 (SSLL…SLFI). His147 serves as a coordination point for Zn(2+). Residue Glu148 is part of the active site. His151 is a binding site for Zn(2+). The next 2 helical transmembrane spans lie at 158–178 (VTLA…ARII) and 199–219 (VATI…VMWF). Glu224 lines the Zn(2+) pocket.

Belongs to the peptidase M48B family. The cofactor is Zn(2+).

The protein localises to the cell inner membrane. This is Protease HtpX from Pseudomonas putida (strain GB-1).